A 391-amino-acid chain; its full sequence is tRNA (cytosine(38)-C(5))-methyltransferase (391 aa).

One can recognise an SAM-dependent MTase C5-type domain in the interval 4–391 (LRALELYSGI…VAKLIKILCD (388 aa)). Residues 13 to 15 (IGG), Asp34, 57 to 58 (IE), and Ser76 contribute to the S-adenosyl-L-methionine site. Cys79 is a catalytic residue. Position 376 (Ser376) interacts with S-adenosyl-L-methionine.

Belongs to the class I-like SAM-binding methyltransferase superfamily. C5-methyltransferase family.

Its subcellular location is the cytoplasm. The enzyme catalyses cytidine(38) in tRNA + S-adenosyl-L-methionine = 5-methylcytidine(38) in tRNA + S-adenosyl-L-homocysteine + H(+). Specifically methylates cytosine 38 in the anticodon loop of tRNA(Asp). Has higher activity on tRNA(Asp) modified with queuosine at position 34. This is tRNA (cytosine(38)-C(5))-methyltransferase (TRDMT1) from Bos taurus (Bovine).